We begin with the raw amino-acid sequence, 654 residues long: MLLRPKSGNILKYGHFLSKRWLTASKLLYSVEEMKIKISQDQYRKALEERIDKIPIENYRNFSIVAHVDHGKSTLSDRLLEMTGVIKPGSKSQVLDKLDVERERGITVKAQTVSMFYNDGKQDYLLHLVDTPGHVDFRAEVSRSYASCGGALLLVDASQGVQAQTVANFYLAYSMGLKLIPIINKIDLDSANIAGAKEQIETTFELDPNDCIAVSAKTGLNVEQIIPSVIKNIPSPVCDVNKPLRALLVDSWHDPYVGVVMLVHIVDGKMKKGMKILSAHTNRTYDVKEVGIMYPDRTPTSFIKAGQVAYIIPGMKNPREALVGDTFYQMGKHEDLEPLPGFEEPKPMVFVGAFPADGKEFNAMDDQMQNLVLNDRSVTLEQETSNALGLGWRLGFLGSLHASVFKERLEKEYGAKIILTAPTVPYKIIYKNGEEKIVTNPDDFPDNQKHYDVESYMEPYVEAIMTVPNEYIGNVMTLCLNNRGEQKEIEYLTTGQVLLKYEIPTSQLVEDFFGKLKGCTKGYASLDYEEAGYRKSDIVKMQLCVNGEPQDALTTVIHRSQAQARGKEYVTRFKKYLSYQLFEVAIQAKINNKVVARETIKAKRKDVTQRLHAADISRYKKLLERQKEGKKQMKLSGKVTIKNDAYQAFLRRED.

The tr-type G domain maps to 57–237 (ENYRNFSIVA…SVIKNIPSPV (181 aa)). Residues 66–73 (AHVDHGKS), 130–134 (DTPGH), and 184–187 (NKID) each bind GTP.

The protein belongs to the TRAFAC class translation factor GTPase superfamily. Classic translation factor GTPase family. LepA subfamily.

The protein localises to the mitochondrion inner membrane. It catalyses the reaction GTP + H2O = GDP + phosphate + H(+). Promotes mitochondrial protein synthesis. May act as a fidelity factor of the translation reaction, by catalyzing a one-codon backward translocation of tRNAs on improperly translocated ribosomes. Binds to mitochondrial ribosomes in a GTP-dependent manner. The protein is Translation factor GUF1, mitochondrial of Candida dubliniensis (strain CD36 / ATCC MYA-646 / CBS 7987 / NCPF 3949 / NRRL Y-17841) (Yeast).